We begin with the raw amino-acid sequence, 136 residues long: Large ribosomal subunit protein bL17 (136 aa).

It belongs to the bacterial ribosomal protein bL17 family. In terms of assembly, part of the 50S ribosomal subunit. Contacts protein L32.

This is Large ribosomal subunit protein bL17 from Rhodopseudomonas palustris (strain BisA53).